The following is a 429-amino-acid chain: MTAVAVVGSQWGDEGKGKITDFLSKDAAMAVRSNGGNNAGHTIDIDGKTFKMRLIPSGIFAAKDNTVIGNGVVINPEVMFSELENLEKNGIDTSGLRISNRAHIIMPYDIKQDEYQEEAKGKNKIGTTKNGIGPTYMDKASRIGIRVCDLLEKDTFEEKLRTNLEIKNELFTKVYGKPALKFEDIFDKYYEYGQRMKKYVTDTSVLVNDALDQNKKVLFEGAQGIMLDIDEGTYPFVTSSNTISGGIASGIGIGANRLDTVIGVCKAYTTRVGAGPFPTELLDETGDRIREIAHEYGTVTGRPRRVGWFDSVALRHSKRVAGINGLSLNLLDVFSGFDKIKICTAYELDGEKIDYYPASLKELYRCKPVYEELPAWEEDITQVKTWDELPENAKKFLNRISELVGVPLVTVSVGPDREQTIVLKNPWEM.

GTP contacts are provided by residues 12–18 and 40–42; these read GDEGKGK and GHT. Asp-13 acts as the Proton acceptor in catalysis. Mg(2+) is bound by residues Asp-13 and Gly-40. Residues 13 to 16, 38 to 41, Thr-128, Arg-142, Gln-223, Thr-238, and Arg-302 each bind IMP; these read DEGK and NAGH. The active-site Proton donor is the His-41. Residue 298–304 participates in substrate binding; sequence TVTGRPR. GTP is bound by residues Arg-304, 330 to 332, and 412 to 414; these read LLD and SVG.

Belongs to the adenylosuccinate synthetase family. As to quaternary structure, homodimer. Requires Mg(2+) as cofactor.

It is found in the cytoplasm. The catalysed reaction is IMP + L-aspartate + GTP = N(6)-(1,2-dicarboxyethyl)-AMP + GDP + phosphate + 2 H(+). It participates in purine metabolism; AMP biosynthesis via de novo pathway; AMP from IMP: step 1/2. Its function is as follows. Plays an important role in the de novo pathway of purine nucleotide biosynthesis. Catalyzes the first committed step in the biosynthesis of AMP from IMP. This chain is Adenylosuccinate synthetase, found in Lactobacillus acidophilus (strain ATCC 700396 / NCK56 / N2 / NCFM).